The following is a 269-amino-acid chain: Sororin (269 aa).

3 disordered regions span residues 1–39 (MSEG…IMKR), 56–110 (VNTG…PKIN), and 146–169 (SLNS…STPN). A compositionally biased stretch (polar residues) spans 57 to 66 (NTGSQSTPKV). The short motif at 85–87 (KEN) is the KEN box element. Residues 146–155 (SLNSSSSLYS) are compositionally biased toward low complexity. An FGF motif motif is present at residues 180-182 (FGF). The C-terminal Sororin domain stretch occupies residues 247-269 (LDEWAAFMNAEFEEAEKFDLTVE).

This sequence belongs to the sororin family. As to quaternary structure, interacts with the APC/C complex. Interacts with the chromatin-bound cohesin complex; the interaction is indirect, occurs after DNA replication and requires acetylation of the cohesin component smc3. Interacts (via the FGF motif) with pds5a and pds5b; the interaction is direct and prevents the interaction of pds5a with wapl. Post-translationally, ubiquitinated by the APC/C complex in G1, leading to its degradation.

The protein localises to the nucleus. The protein resides in the chromosome. Its subcellular location is the cytoplasm. Regulator of sister chromatid cohesion in mitosis stabilizing cohesin complex association with chromatin. May antagonize the action of wapl which stimulates cohesin dissociation from chromatin. Cohesion ensures that chromosome partitioning is accurate in both meiotic and mitotic cells and plays an important role in DNA repair. Required for efficient DNA double-stranded break repair. This is Sororin (cdca5-a) from Xenopus laevis (African clawed frog).